The chain runs to 455 residues: MASTTGALILAAGKGTRMHSDKPKVLQTILGEPMLRFVMDALAPVFGDRVWTVVGHRADMIYAAFAGEDARFVVQEQQLGTGHALQMAWESLRAAGLDRVVVVNGDTPLLATETIDFFLKESAEADIAFMTLTLPDPGAYGRVVRHNGHVAAIVEAKDYDEALYGPEPSEINTGIYALRLDAVESLLPRLTNANRSGEYYITDLVGLAVAERMNVLGIQCGEDPNLLGVNNPAELIRSEALLRTRLVIGHIEGGVLIHAPETVRISPRATIEPGAEIYGPCEIYGTSRIARGAVVHSHCWLRNAEVESGSEVKSFSHLEGATVGKGCSVGPFARLRPGAVLDEEARVGNFVEMKKARLHKGAKAGHLTYLGDADVGAGANIGAGTITCNYDGKNKHRTVIGAGAFIGSNTALVAPVTVGDGSLVGAGSVITKDVPEASLAIARGRQTNLPRKPKA.

Residues 1-232 (MASTTGALIL…DPNLLGVNNP (232 aa)) are pyrophosphorylase. UDP-N-acetyl-alpha-D-glucosamine contacts are provided by residues 10-13 (LAAG), Lys-24, Gln-75, and 80-81 (GT). Mg(2+) is bound at residue Asp-106. UDP-N-acetyl-alpha-D-glucosamine contacts are provided by Gly-141, Glu-155, Asn-172, and Asn-230. Asn-230 contributes to the Mg(2+) binding site. Residues 233–253 (AELIRSEALLRTRLVIGHIEG) form a linker region. The tract at residues 254–455 (GVLIHAPETV…QTNLPRKPKA (202 aa)) is N-acetyltransferase. Residues Arg-336 and Lys-354 each contribute to the UDP-N-acetyl-alpha-D-glucosamine site. His-366 serves as the catalytic Proton acceptor. Residues Tyr-369 and Asn-380 each contribute to the UDP-N-acetyl-alpha-D-glucosamine site. Acetyl-CoA is bound by residues Ala-383, 389–390 (NY), Ser-408, Ala-426, and Arg-443.

This sequence in the N-terminal section; belongs to the N-acetylglucosamine-1-phosphate uridyltransferase family. In the C-terminal section; belongs to the transferase hexapeptide repeat family. In terms of assembly, homotrimer. It depends on Mg(2+) as a cofactor.

The protein localises to the cytoplasm. The enzyme catalyses alpha-D-glucosamine 1-phosphate + acetyl-CoA = N-acetyl-alpha-D-glucosamine 1-phosphate + CoA + H(+). It carries out the reaction N-acetyl-alpha-D-glucosamine 1-phosphate + UTP + H(+) = UDP-N-acetyl-alpha-D-glucosamine + diphosphate. It participates in nucleotide-sugar biosynthesis; UDP-N-acetyl-alpha-D-glucosamine biosynthesis; N-acetyl-alpha-D-glucosamine 1-phosphate from alpha-D-glucosamine 6-phosphate (route II): step 2/2. Its pathway is nucleotide-sugar biosynthesis; UDP-N-acetyl-alpha-D-glucosamine biosynthesis; UDP-N-acetyl-alpha-D-glucosamine from N-acetyl-alpha-D-glucosamine 1-phosphate: step 1/1. The protein operates within bacterial outer membrane biogenesis; LPS lipid A biosynthesis. Its function is as follows. Catalyzes the last two sequential reactions in the de novo biosynthetic pathway for UDP-N-acetylglucosamine (UDP-GlcNAc). The C-terminal domain catalyzes the transfer of acetyl group from acetyl coenzyme A to glucosamine-1-phosphate (GlcN-1-P) to produce N-acetylglucosamine-1-phosphate (GlcNAc-1-P), which is converted into UDP-GlcNAc by the transfer of uridine 5-monophosphate (from uridine 5-triphosphate), a reaction catalyzed by the N-terminal domain. The protein is Bifunctional protein GlmU of Nitratidesulfovibrio vulgaris (strain ATCC 29579 / DSM 644 / CCUG 34227 / NCIMB 8303 / VKM B-1760 / Hildenborough) (Desulfovibrio vulgaris).